Consider the following 81-residue polypeptide: uncharacterized protein (81 aa).

This is an uncharacterized protein from Sulfolobus islandicus filamentous virus (isolate Iceland/Hveragerdi) (SIFV).